The sequence spans 109 residues: Small ribosomal subunit protein bS6 (109 aa).

This sequence belongs to the bacterial ribosomal protein bS6 family.

Its function is as follows. Binds together with bS18 to 16S ribosomal RNA. This Ehrlichia chaffeensis (strain ATCC CRL-10679 / Arkansas) protein is Small ribosomal subunit protein bS6.